Here is a 207-residue protein sequence, read N- to C-terminus: uncharacterized protein (207 aa).

A helical transmembrane segment spans residues 177 to 197 (LILAIGFIIGILLPTFFILLG).

The protein localises to the membrane. This is an uncharacterized protein from Haemophilus influenzae (strain ATCC 51907 / DSM 11121 / KW20 / Rd).